We begin with the raw amino-acid sequence, 356 residues long: Fe(3+) ions import ATP-binding protein FbpC 2 (356 aa).

Residues 12–246 (LTVKNLNKFF…PNHLETAKFM (235 aa)) enclose the ABC transporter domain. 44 to 51 (GSSGCGKT) provides a ligand contact to ATP.

It belongs to the ABC transporter superfamily. Fe(3+) ion importer (TC 3.A.1.10) family. The complex is composed of two ATP-binding proteins (FbpC), two transmembrane proteins (FbpB) and a solute-binding protein (FbpA).

The protein localises to the cell inner membrane. It carries out the reaction Fe(3+)(out) + ATP + H2O = Fe(3+)(in) + ADP + phosphate + H(+). In terms of biological role, part of the ABC transporter complex FbpABC involved in Fe(3+) ions import. Responsible for energy coupling to the transport system. This is Fe(3+) ions import ATP-binding protein FbpC 2 from Haemophilus influenzae (strain ATCC 51907 / DSM 11121 / KW20 / Rd).